Reading from the N-terminus, the 91-residue chain is Dynein light chain 1, cytoplasmic (91 aa).

Belongs to the dynein light chain family. Homodimer. Cytoplasmic dynein consists of two catalytic heavy chains (HCs) and a number of non-catalytic subunits which present intermediate chains (ICs), light intermediate chains (LICs) and light chains (LCs). Component of the nuclear pore complex (NPC). NPC constitutes the exclusive means of nucleocytoplasmic transport. NPCs allow the passive diffusion of ions and small molecules and the active, nuclear transport receptor-mediated bidirectional transport of macromolecules such as proteins, RNAs, ribonucleoparticles (RNPs), and ribosomal subunits across the nuclear envelope. Due to its 8-fold rotational symmetry, all subunits are present with 8 copies or multiples thereof.

The protein resides in the cytoplasm. It localises to the cytoskeleton. It is found in the nucleus. Its subcellular location is the nuclear pore complex. Acts as one of several non-catalytic accessory components of the cytoplasmic dynein complex that are thought to be involved in linking dynein to cargos and to adapter proteins that regulate dynein function. Cytoplasmic dynein 1 acts as a motor for the intracellular retrograde motility of vesicles and organelles along microtubules. May play a role in changing or maintaining the spatial distribution of cytoskeletal structures. Also a component of the nuclear pore complex. This chain is Dynein light chain 1, cytoplasmic (DYN2), found in Debaryomyces hansenii (strain ATCC 36239 / CBS 767 / BCRC 21394 / JCM 1990 / NBRC 0083 / IGC 2968) (Yeast).